We begin with the raw amino-acid sequence, 63 residues long: Toxin S6C6 (63 aa).

5 cysteine pairs are disulfide-bonded: Cys3-Cys24, Cys6-Cys11, Cys17-Cys39, Cys43-Cys55, and Cys56-Cys61.

The protein belongs to the three-finger toxin family. Ancestral subfamily. Orphan group XIX sub-subfamily. In terms of tissue distribution, expressed by the venom gland.

The protein localises to the secreted. Functionally, may enhance presynaptic acetylcholine release. This Dendroaspis jamesoni kaimosae (Eastern Jameson's mamba) protein is Toxin S6C6.